The chain runs to 365 residues: Neuronal migration protein doublecortin (365 aa).

S28 carries the phosphoserine; by CDK5 modification. S47 carries the post-translational modification Phosphoserine; by MARK1 and PKA. 2 Doublecortin domains span residues 53–139 and 180–263; these read KKVR…VEYT and KLVT…AQDD. Residue Y70 is modified to Phosphotyrosine; by ABL. S74 carries the post-translational modification Phosphoserine; by PKC. At S90 the chain carries Phosphoserine; by CK2. S110 carries the phosphoserine; by PKC modification. S115 is modified (phosphoserine; by CK2, MARK1 and PKA). S265 carries the phosphoserine; by CK2 modification. Positions 275 to 365 are disordered; the sequence is KGNPSATAGP…DDSDSLGDSM (91 aa). Residue S287 is modified to Phosphoserine; by CDK5. A Phosphothreonine; by CDK5 modification is found at T289. Position 294 is a phosphoserine; by PKC (S294). Residue S297 is modified to Phosphoserine; by CDK5. Residue S306 is modified to Phosphoserine; by CK2. Phosphoserine; by DYRK2 is present on S306. Polar residues predominate over residues 307–341; it reads PADSGNDQDANGTSSSQLSTPKSKQSPISTPTSPG. T326 carries the phosphothreonine; by CDK5 modification. The residue at position 326 (T326) is a Phosphothreonine; by PKC and MAPK. A Phosphoserine; by CDK5 modification is found at S332. S332 bears the Phosphoserine; by MAPK mark. T336 is modified (phosphothreonine; by MAPK). The residue at position 339 (S339) is a Phosphoserine; by CDK5. Phosphoserine; by MAPK is present on S339. S342 is subject to Phosphoserine; by PKC. Phosphoserine; by CK2 occurs at positions 354 and 360. The segment covering 356–365 has biased composition (acidic residues); that stretch reads DDSDSLGDSM.

Interacts with tubulin. Interacts with USP9X. Post-translationally, phosphorylation by MARK1, MARK2 and PKA regulates its ability to bind microtubules. Phosphorylation at Ser-265 and Ser-297 seems to occur only in neonatal brain, the levels falling precipitously by postnatal day 21. Ubiquitinated by MDM2, leading to its degradation by the proteasome. Ubiquitinated by MDM2 and subsequent degradation leads to reduce the dendritic spine density of olfactory bulb granule cells.

It localises to the cytoplasm. The protein resides in the cell projection. Its subcellular location is the neuron projection. Functionally, microtubule-associated protein required for initial steps of neuronal dispersion and cortex lamination during cerebral cortex development. May act by competing with the putative neuronal protein kinase DCLK1 in binding to a target protein. May in that way participate in a signaling pathway that is crucial for neuronal interaction before and during migration, possibly as part of a calcium ion-dependent signal transduction pathway. May participate along with PAFAH1B1/LIS-1 in a distinct overlapping signaling pathway that promotes neuronal migration. In Rattus norvegicus (Rat), this protein is Neuronal migration protein doublecortin (Dcx).